The chain runs to 242 residues: DNA repair protein RecO (242 aa).

This sequence belongs to the RecO family.

Functionally, involved in DNA repair and RecF pathway recombination. The polypeptide is DNA repair protein RecO (Wolbachia pipientis subsp. Culex pipiens (strain wPip)).